The primary structure comprises 651 residues: ATP-dependent RNA helicase MRH4, mitochondrial (651 aa).

The transit peptide at 1–61 directs the protein to the mitochondrion; sequence MLRSSLGSVC…SNARQATRRE (61 aa). A compositionally biased stretch (polar residues) spans 45 to 56; it reads SSLSFSTSNARQ. A disordered region spans residues 45-137; the sequence is SSLSFSTSNA…GGKKLGRDGK (93 aa). Basic and acidic residues-rich tracts occupy residues 72–83 and 124–137; these read RVGRSTARDGDK and NGRE…RDGK. The Q motif motif lies at 167 to 200; that stretch reads DSFDQFDLLPQVKDAVLNEALKGMLDIKPTPVQR. Residues 210-241 are disordered; it reads TTGARSRWRTKSKPADSGSEAASPDAPPPPRE. Over residues 224–233 the composition is skewed to low complexity; that stretch reads ADSGSEAASP. One can recognise a Helicase ATP-binding domain in the interval 234 to 445; that stretch reads DAPPPPREEF…ASRFPNMRRI (212 aa). 247–254 is an ATP binding site; sequence AETGSGKT. The DEAD box motif lies at 392–395; the sequence is DEAD. One can recognise a Helicase C-terminal domain in the interval 494–651; it reads PVKGQVDVRR…ESMFMGQALV (158 aa).

This sequence belongs to the DEAD box helicase family. MRH4 subfamily.

The protein localises to the mitochondrion. It catalyses the reaction ATP + H2O = ADP + phosphate + H(+). In terms of biological role, ATP-binding RNA helicase involved in mitochondrial RNA metabolism. Required for maintenance of mitochondrial DNA. This is ATP-dependent RNA helicase MRH4, mitochondrial (MRH4) from Pyricularia oryzae (strain 70-15 / ATCC MYA-4617 / FGSC 8958) (Rice blast fungus).